The sequence spans 145 residues: MIALIQRVKRASVSVDNTIVGKIDQGLLVLLGIEREDNIEKMVKLATKVINYRVFSDEDGKMNLNLAQVGGQLLVVSQFTLAADTGKGLRPSFSCAATPEQADRLYLAFVEYCRQQGVMTQTGQFGADMQVELVNDGPVTFNLQV.

The Gly-cisPro motif, important for rejection of L-amino acids signature appears at 137-138 (GP).

It belongs to the DTD family. As to quaternary structure, homodimer.

It localises to the cytoplasm. It catalyses the reaction glycyl-tRNA(Ala) + H2O = tRNA(Ala) + glycine + H(+). The catalysed reaction is a D-aminoacyl-tRNA + H2O = a tRNA + a D-alpha-amino acid + H(+). Functionally, an aminoacyl-tRNA editing enzyme that deacylates mischarged D-aminoacyl-tRNAs. Also deacylates mischarged glycyl-tRNA(Ala), protecting cells against glycine mischarging by AlaRS. Acts via tRNA-based rather than protein-based catalysis; rejects L-amino acids rather than detecting D-amino acids in the active site. By recycling D-aminoacyl-tRNA to D-amino acids and free tRNA molecules, this enzyme counteracts the toxicity associated with the formation of D-aminoacyl-tRNA entities in vivo and helps enforce protein L-homochirality. The polypeptide is D-aminoacyl-tRNA deacylase (Shewanella frigidimarina (strain NCIMB 400)).